Reading from the N-terminus, the 200-residue chain is Small ribosomal subunit protein uS4 (200 aa).

Residues 22–43 form a disordered region; that stretch reads TGKELQKRPYPPGQHGPSQRRK. The 61-residue stretch at 92–152 folds into the S4 RNA-binding domain; the sequence is SRLDNLVYRL…EKSRNLQVIK (61 aa).

This sequence belongs to the universal ribosomal protein uS4 family. In terms of assembly, part of the 30S ribosomal subunit. Contacts protein S5. The interaction surface between S4 and S5 is involved in control of translational fidelity.

In terms of biological role, one of the primary rRNA binding proteins, it binds directly to 16S rRNA where it nucleates assembly of the body of the 30S subunit. Its function is as follows. With S5 and S12 plays an important role in translational accuracy. The sequence is that of Small ribosomal subunit protein uS4 from Geobacillus sp. (strain WCH70).